A 149-amino-acid chain; its full sequence is Arginine repressor (149 aa).

The protein belongs to the ArgR family.

The protein resides in the cytoplasm. Its pathway is amino-acid biosynthesis; L-arginine biosynthesis [regulation]. Functionally, regulates arginine biosynthesis genes. In Exiguobacterium sp. (strain ATCC BAA-1283 / AT1b), this protein is Arginine repressor.